Consider the following 102-residue polypeptide: Small ribosomal subunit protein uS10 (102 aa).

This sequence belongs to the universal ribosomal protein uS10 family. In terms of assembly, part of the 30S ribosomal subunit.

Involved in the binding of tRNA to the ribosomes. The protein is Small ribosomal subunit protein uS10 of Streptococcus suis (strain 98HAH33).